The chain runs to 171 residues: MKQTSFFIPLLGTLLLYGCAGTSTEFECNATTSDTCMTMEQANEKAKKLERSSEAKPVAASLPRLAEGNFRTMPVQTVTATTPSGSRPAVTAHPEQKLLAPRPLFTAAREVKTVVPVSSVTPVTPPRPLRTGEQTAALWIAPYIDNQDVYHQPSSVFFVIKPSAWGKPRIN.

The signal sequence occupies residues 1–18 (MKQTSFFIPLLGTLLLYG). A lipid anchor (N-palmitoyl cysteine) is attached at Cys-19. Cys-19 carries S-diacylglycerol cysteine lipidation.

Its subcellular location is the cell outer membrane. Functionally, involved in F pilus assembly. Appears to facilitate the polymerization of inner membrane-located pilin subunits into extracellular F pilus filaments. The protein is Protein TraV (traV) of Escherichia coli (strain K12).